The sequence spans 501 residues: Pyruvate kinase (501 aa).

R50 serves as a coordination point for substrate. Residues N52, S54, D85, and T86 each coordinate K(+). 52–55 serves as a coordination point for ATP; it reads NFSH. Residues R92 and K178 each coordinate ATP. Mg(2+) is bound at residue E243. Residues G266, D267, and T299 each coordinate substrate. D267 provides a ligand contact to Mg(2+).

This sequence belongs to the pyruvate kinase family. In terms of assembly, homotetramer. Mg(2+) serves as cofactor. K(+) is required as a cofactor.

It carries out the reaction pyruvate + ATP = phosphoenolpyruvate + ADP + H(+). Its pathway is carbohydrate degradation; glycolysis; pyruvate from D-glyceraldehyde 3-phosphate: step 5/5. This chain is Pyruvate kinase (PYK1), found in Kluyveromyces lactis (strain ATCC 8585 / CBS 2359 / DSM 70799 / NBRC 1267 / NRRL Y-1140 / WM37) (Yeast).